The sequence spans 450 residues: Chromosomal replication initiator protein DnaA (450 aa).

Residues 1-84 (MTENEQIFWN…AVDYVYEEDL (84 aa)) are domain I, interacts with DnaA modulators. Positions 84–109 (LIIEQQHQGQQGYTEQAFQQLPAVQS) are domain II. Positions 110 to 328 (DLNPKYSFDN…GALKDISLVA (219 aa)) are domain III, AAA+ region. G154, G156, K157, and T158 together coordinate ATP. Residues 329–450 (NFKQIDTITV…EIETIKNKIK (122 aa)) form a domain IV, binds dsDNA region.

It belongs to the DnaA family. In terms of assembly, oligomerizes as a right-handed, spiral filament on DNA at oriC.

It is found in the cytoplasm. In terms of biological role, plays an essential role in the initiation and regulation of chromosomal replication. ATP-DnaA binds to the origin of replication (oriC) to initiate formation of the DNA replication initiation complex once per cell cycle. Binds the DnaA box (a 9 base pair repeat at the origin) and separates the double-stranded (ds)DNA. Forms a right-handed helical filament on oriC DNA; dsDNA binds to the exterior of the filament while single-stranded (ss)DNA is stabiized in the filament's interior. The ATP-DnaA-oriC complex binds and stabilizes one strand of the AT-rich DNA unwinding element (DUE), permitting loading of DNA polymerase. After initiation quickly degrades to an ADP-DnaA complex that is not apt for DNA replication. Binds acidic phospholipids. The chain is Chromosomal replication initiator protein DnaA from Streptococcus equi subsp. zooepidemicus (strain MGCS10565).